Reading from the N-terminus, the 69-residue chain is UPF0150 protein AF_1072 (69 aa).

The protein belongs to the UPF0150 family.

This is UPF0150 protein AF_1072 from Archaeoglobus fulgidus (strain ATCC 49558 / DSM 4304 / JCM 9628 / NBRC 100126 / VC-16).